A 657-amino-acid polypeptide reads, in one-letter code: Threonine--tRNA ligase (657 aa).

The region spanning 1–70 (MSDHKESTGA…NSDAAIEIIT (70 aa)) is the TGS domain. The segment at 253-555 (DHRKLGAELE…LIEHTAGNFP (303 aa)) is catalytic. Zn(2+)-binding residues include Cys-351, His-402, and His-532.

It belongs to the class-II aminoacyl-tRNA synthetase family. In terms of assembly, homodimer. It depends on Zn(2+) as a cofactor.

Its subcellular location is the cytoplasm. The catalysed reaction is tRNA(Thr) + L-threonine + ATP = L-threonyl-tRNA(Thr) + AMP + diphosphate + H(+). Functionally, catalyzes the attachment of threonine to tRNA(Thr) in a two-step reaction: L-threonine is first activated by ATP to form Thr-AMP and then transferred to the acceptor end of tRNA(Thr). Also edits incorrectly charged L-seryl-tRNA(Thr). The polypeptide is Threonine--tRNA ligase (Chlorobium chlorochromatii (strain CaD3)).